The chain runs to 336 residues: Alcohol dehydrogenase, propanol-preferring (336 aa).

Residues Cys-37, His-58, Cys-89, Cys-92, Cys-95, Cys-103, and Cys-145 each contribute to the Zn(2+) site.

Belongs to the zinc-containing alcohol dehydrogenase family. The cofactor is Zn(2+).

The enzyme catalyses a primary alcohol + NAD(+) = an aldehyde + NADH + H(+). The catalysed reaction is a secondary alcohol + NAD(+) = a ketone + NADH + H(+). Preferred specificity is towards 1-propanol. The sequence is that of Alcohol dehydrogenase, propanol-preferring (adhP) from Escherichia coli (strain K12).